Consider the following 84-residue polypeptide: Small ribosomal subunit protein bS16 (84 aa).

The protein belongs to the bacterial ribosomal protein bS16 family.

The protein is Small ribosomal subunit protein bS16 of Deinococcus radiodurans (strain ATCC 13939 / DSM 20539 / JCM 16871 / CCUG 27074 / LMG 4051 / NBRC 15346 / NCIMB 9279 / VKM B-1422 / R1).